The following is a 146-amino-acid chain: Hemoglobin subunit beta (146 aa).

A Globin domain is found at 2–146; it reads HWSAEEKQLI…VAHALARKYH (145 aa). Residues His63 and His92 each coordinate heme b.

This sequence belongs to the globin family. As to quaternary structure, heterotetramer of two alpha chains and two beta chains. Red blood cells.

Functionally, involved in oxygen transport from the lung to the various peripheral tissues. The sequence is that of Hemoglobin subunit beta (HBB) from Eudyptes chrysocome (Western rockhopper penguin).